The sequence spans 95 residues: U6 snRNA-associated Sm-like protein LSm2 (95 aa).

The 75-residue stretch at 2-76 (LFYSFFKSLV…VRYVQLPADE (75 aa)) folds into the Sm domain. Threonine 79 is subject to Phosphothreonine.

It belongs to the snRNP Sm proteins family. Component of the precatalytic spliceosome (spliceosome B complex). Component of the U4/U6-U5 tri-snRNP complex, a building block of the precatalytic spliceosome (spliceosome B complex). The U4/U6-U5 tri-snRNP complex is composed of the U4, U6 and U5 snRNAs and at least PRPF3, PRPF4, PRPF6, PRPF8, PRPF31, SNRNP200, TXNL4A, SNRNP40, SNRPB, SNRPD1, SNRPD2, SNRPD3, SNRPE, SNRPF, SNRPG, DDX23, CD2BP2, PPIH, SNU13, EFTUD2, SART1 and USP39, plus LSM2, LSM3, LSM4, LSM5, LSM6, LSM7 and LSM8. LSM2, LSM3, LSM4, LSM5, LSM6, LSM7 and LSM8 form a heptameric, ring-shaped subcomplex (the LSM2-8 complex) that is part of the U4/U6-U5 tri-snRNP complex and the precatalytic spliceosome.

It is found in the nucleus. Plays a role in pre-mRNA splicing as component of the U4/U6-U5 tri-snRNP complex that is involved in spliceosome assembly, and as component of the precatalytic spliceosome (spliceosome B complex). The heptameric LSM2-8 complex binds specifically to the 3'-terminal U-tract of U6 snRNA. The sequence is that of U6 snRNA-associated Sm-like protein LSm2 (LSM2) from Homo sapiens (Human).